A 350-amino-acid polypeptide reads, in one-letter code: Galactokinase (350 aa).

14 to 17 contributes to the substrate binding site; that stretch reads EHTD. ATP-binding positions include S46 and 96–102; that span reads GAGLSSS. Positions 102 and 134 each coordinate Mg(2+). D146 acts as the Proton acceptor in catalysis. Residue Y196 coordinates substrate.

This sequence belongs to the GHMP kinase family. GalK subfamily.

It localises to the cytoplasm. The catalysed reaction is alpha-D-galactose + ATP = alpha-D-galactose 1-phosphate + ADP + H(+). It participates in carbohydrate metabolism; galactose metabolism. Catalyzes the transfer of the gamma-phosphate of ATP to D-galactose to form alpha-D-galactose-1-phosphate (Gal-1-P). This Thermotoga petrophila (strain ATCC BAA-488 / DSM 13995 / JCM 10881 / RKU-1) protein is Galactokinase.